Here is a 300-residue protein sequence, read N- to C-terminus: GTPase Era (300 aa).

The Era-type G domain occupies 5-176 (RSGFVCLIGR…IDVLAAALPP (172 aa)). The G1 stretch occupies residues 13-20 (GRPNTGKS). Position 13–20 (13–20 (GRPNTGKS)) interacts with GTP. Residues 39 to 43 (QTTRH) form a G2 region. The tract at residues 61–64 (DTPG) is G3. GTP-binding positions include 61–65 (DTPGL) and 125–128 (TKID). The G4 stretch occupies residues 125–128 (TKID). The segment at 155–157 (VSA) is G5. One can recognise a KH type-2 domain in the interval 207–286 (VHDELPHSLA…YLDLHVNVAK (80 aa)).

It belongs to the TRAFAC class TrmE-Era-EngA-EngB-Septin-like GTPase superfamily. Era GTPase family. As to quaternary structure, monomer.

It is found in the cell envelope. It localises to the secreted. The protein localises to the cell wall. Its function is as follows. Exhibits GTPase activity. Binds RNA but is probably not involved in ribosome assembly in mycobacteria. This is GTPase Era from Mycobacterium leprae (strain TN).